Consider the following 147-residue polypeptide: UPF0735 ACT domain-containing protein BH1214 (147 aa).

One can recognise an ACT domain in the interval 70–145 (TLSINLEDRS…AVEKVELVGS (76 aa)).

Belongs to the UPF0735 family.

The polypeptide is UPF0735 ACT domain-containing protein BH1214 (Halalkalibacterium halodurans (strain ATCC BAA-125 / DSM 18197 / FERM 7344 / JCM 9153 / C-125) (Bacillus halodurans)).